The chain runs to 236 residues: Uridylate kinase (236 aa).

An ATP-binding site is contributed by 12–15 (KLSG). Residues 20–25 (GEKGFG) form an involved in allosteric activation by GTP region. Position 54 (Gly54) interacts with UMP. Positions 55 and 59 each coordinate ATP. UMP is bound by residues Asp72 and 133-140 (TGNPYFST). 3 residues coordinate ATP: Asn161, Tyr166, and Asp169.

The protein belongs to the UMP kinase family. As to quaternary structure, homohexamer.

Its subcellular location is the cytoplasm. It catalyses the reaction UMP + ATP = UDP + ADP. It participates in pyrimidine metabolism; CTP biosynthesis via de novo pathway; UDP from UMP (UMPK route): step 1/1. Its activity is regulated as follows. Allosterically activated by GTP. Inhibited by UTP. In terms of biological role, catalyzes the reversible phosphorylation of UMP to UDP. The protein is Uridylate kinase of Alkaliphilus metalliredigens (strain QYMF).